The sequence spans 248 residues: Phosphoglycerate mutase (248 aa).

Substrate-binding positions include Arg8 to Asn15, Thr21 to Gly22, Arg60, Glu87 to Tyr90, Lys98, Arg114 to Arg115, and Gly183 to Asn184. His9 functions as the Tele-phosphohistidine intermediate in the catalytic mechanism. The active-site Proton donor/acceptor is Glu87.

Belongs to the phosphoglycerate mutase family. BPG-dependent PGAM subfamily.

It is found in the cytoplasm. The enzyme catalyses (2R)-2-phosphoglycerate = (2R)-3-phosphoglycerate. It functions in the pathway carbohydrate degradation; glycolysis; pyruvate from D-glyceraldehyde 3-phosphate: step 3/5. The polypeptide is Phosphoglycerate mutase (GPM1) (Candida albicans (strain SC5314 / ATCC MYA-2876) (Yeast)).